A 100-amino-acid polypeptide reads, in one-letter code: UPF0213 protein YhbQ (100 aa).

The GIY-YIG domain maps to 2-77; the sequence is TPWYLYLIRT…KQLTKRQKER (76 aa).

The protein belongs to the UPF0213 family.

The sequence is that of UPF0213 protein YhbQ from Salmonella choleraesuis (strain SC-B67).